Reading from the N-terminus, the 1225-residue chain is DNA-directed RNA polymerase subunit beta' (1225 aa).

4 residues coordinate Zn(2+): C60, C62, C75, and C78. Mg(2+) contacts are provided by D450, D452, and D454. The Zn(2+) site is built by C818, C892, C899, and C902.

It belongs to the RNA polymerase beta' chain family. The RNAP catalytic core consists of 2 alpha, 1 beta, 1 beta' and 1 omega subunit. When a sigma factor is associated with the core the holoenzyme is formed, which can initiate transcription. Requires Mg(2+) as cofactor. Zn(2+) is required as a cofactor.

It carries out the reaction RNA(n) + a ribonucleoside 5'-triphosphate = RNA(n+1) + diphosphate. In terms of biological role, DNA-dependent RNA polymerase catalyzes the transcription of DNA into RNA using the four ribonucleoside triphosphates as substrates. This is DNA-directed RNA polymerase subunit beta' from Streptococcus pneumoniae (strain ATCC BAA-255 / R6).